The sequence spans 372 residues: Ketol-acid reductoisomerase (NADP(+)) (372 aa).

The tract at residues Met1 to Asp25 is disordered. Acidic residues predominate over residues Thr10–Asp19. The region spanning Leu24–Thr205 is the KARI N-terminal Rossmann domain. Residues Tyr49 to Gln52, Ser75, Ser77, and Asp107 to Gln110 contribute to the NADP(+) site. His131 is a catalytic residue. Residue Gly157 coordinates NADP(+). Residues Thr206 to Ser351 enclose the KARI C-terminal knotted domain. Mg(2+) contacts are provided by Asp214, Glu218, Glu250, and Glu254. Residue Ser275 coordinates substrate. Positions Ser351–Asp372 are disordered. Residues Asp352–Asp372 show a composition bias toward acidic residues.

The protein belongs to the ketol-acid reductoisomerase family. Mg(2+) is required as a cofactor.

The catalysed reaction is (2R)-2,3-dihydroxy-3-methylbutanoate + NADP(+) = (2S)-2-acetolactate + NADPH + H(+). It catalyses the reaction (2R,3R)-2,3-dihydroxy-3-methylpentanoate + NADP(+) = (S)-2-ethyl-2-hydroxy-3-oxobutanoate + NADPH + H(+). It participates in amino-acid biosynthesis; L-isoleucine biosynthesis; L-isoleucine from 2-oxobutanoate: step 2/4. Its pathway is amino-acid biosynthesis; L-valine biosynthesis; L-valine from pyruvate: step 2/4. Its function is as follows. Involved in the biosynthesis of branched-chain amino acids (BCAA). Catalyzes an alkyl-migration followed by a ketol-acid reduction of (S)-2-acetolactate (S2AL) to yield (R)-2,3-dihydroxy-isovalerate. In the isomerase reaction, S2AL is rearranged via a Mg-dependent methyl migration to produce 3-hydroxy-3-methyl-2-ketobutyrate (HMKB). In the reductase reaction, this 2-ketoacid undergoes a metal-dependent reduction by NADPH to yield (R)-2,3-dihydroxy-isovalerate. In Haloquadratum walsbyi (strain DSM 16790 / HBSQ001), this protein is Ketol-acid reductoisomerase (NADP(+)).